Consider the following 412-residue polypeptide: uncharacterized protein (412 aa).

One can recognise a TRAM domain in the interval 6-64 (ELAKGDIISVEVLRPAHGGEGIGHHDGRVIFVKGGIPGDVVDVEIAQLKKKWARGEVVK). Gln242, Tyr278, Glu300, and Asp341 together coordinate S-adenosyl-L-methionine. Cys368 functions as the Nucleophile in the catalytic mechanism.

This sequence belongs to the class I-like SAM-binding methyltransferase superfamily. RNA M5U methyltransferase family.

This is an uncharacterized protein from Corynebacterium glutamicum (strain ATCC 13032 / DSM 20300 / JCM 1318 / BCRC 11384 / CCUG 27702 / LMG 3730 / NBRC 12168 / NCIMB 10025 / NRRL B-2784 / 534).